Here is a 544-residue protein sequence, read N- to C-terminus: Chaperonin GroEL (544 aa).

Residues 30-33 (TLGP), K51, 87-91 (DGTTT), G415, 481-483 (DAL), and D497 contribute to the ATP site.

It belongs to the chaperonin (HSP60) family. In terms of assembly, forms a cylinder of 14 subunits composed of two heptameric rings stacked back-to-back. Interacts with the co-chaperonin GroES.

Its subcellular location is the cytoplasm. It catalyses the reaction ATP + H2O + a folded polypeptide = ADP + phosphate + an unfolded polypeptide.. Functionally, together with its co-chaperonin GroES, plays an essential role in assisting protein folding. The GroEL-GroES system forms a nano-cage that allows encapsulation of the non-native substrate proteins and provides a physical environment optimized to promote and accelerate protein folding. In Chlamydia felis (strain Fe/C-56) (Chlamydophila felis), this protein is Chaperonin GroEL.